The following is a 201-amino-acid chain: Large ribosomal subunit protein uL4 (201 aa).

Positions 45 to 75 (AQKSRSEVSGSGKKPWRQKGTGRARSGSLRS) are disordered.

Belongs to the universal ribosomal protein uL4 family. In terms of assembly, part of the 50S ribosomal subunit.

Its function is as follows. One of the primary rRNA binding proteins, this protein initially binds near the 5'-end of the 23S rRNA. It is important during the early stages of 50S assembly. It makes multiple contacts with different domains of the 23S rRNA in the assembled 50S subunit and ribosome. Functionally, forms part of the polypeptide exit tunnel. This chain is Large ribosomal subunit protein uL4, found in Buchnera aphidicola subsp. Cinara cedri (strain Cc).